Consider the following 686-residue polypeptide: Protein-glutamine gamma-glutamyltransferase 2 (686 aa).

At A2 the chain carries N-acetylalanine. 2 disulfide bridges follow: C230-C370 and C370-C371. Active-site residues include C277, H335, and D358. Residues N398, D400, E437, E447, and E452 each contribute to the Ca(2+) site. K468 is subject to N6-acetyllysine. Residue 476 to 483 (RIRVGDSM) participates in GTP binding. E538 is a Ca(2+) binding site. Residue 579 to 582 (RDLY) coordinates GTP. Residue Q632 forms an Isoglutamyl lysine isopeptide (Gln-Lys) (interchain with K-?) linkage.

It belongs to the transglutaminase superfamily. Transglutaminase family. Monomer. Interacts with phospholipase C; promoting alpha-1 adrenergic receptor signaling. Interacts with PLCD1. It depends on Ca(2+) as a cofactor. Disulfide bond formation inactivates the calcium-dependent acyltransferase activity. Cys-370 can form disulfide bonds with both Cys-230 and Cys-371: formation of a disulfide bond between Cys-230 and Cys-370 facilitates formation of the disulfide between Cys-370 and Cys-371, which promotes inactivation of the acyltransferase activity. May also form interchain disulfids between Cys-230 and Cys-370. Ca(2+) protects against disulfide bond formation and inactivation. In terms of processing, auto-transglutaminated: Forms covalent cross-links mediated by transglutaminase between Gln-632 and the epsilon-amino group of a lysine residue of itself or HMGB1, forming homopolymers and heteropolymers, respectively. Post-translationally, S-nitrosylated, leading to inactivation of the acyltransferase activity.

It localises to the cytoplasm. It is found in the cytosol. The protein localises to the nucleus. Its subcellular location is the chromosome. The protein resides in the secreted. It localises to the extracellular space. It is found in the extracellular matrix. The protein localises to the cell membrane. Its subcellular location is the mitochondrion. The enzyme catalyses L-glutaminyl-[protein] + L-lysyl-[protein] = [protein]-L-lysyl-N(6)-5-L-glutamyl-[protein] + NH4(+). It carries out the reaction L-glutaminyl-[protein] + serotonin = 5-serotonyl-L-glutamyl-[protein] + NH4(+). The catalysed reaction is L-glutaminyl-[protein] + dopamine = 5-dopaminyl-L-glutamyl-[protein] + NH4(+). It catalyses the reaction L-glutaminyl-[protein] + histamine = 5-histaminyl-L-glutamyl-[protein] + NH4(+). The enzyme catalyses L-glutaminyl-[protein] + (R)-noradrenaline = 5-(R)-noradrenalinyl-L-glutamyl-[protein] + NH4(+). It carries out the reaction L-glutaminyl-[protein] + H2O = L-glutamyl-[protein] + NH4(+). Its activity is regulated as follows. Acyltransferase activity is regulated by the binding of GTP and Ca(2+): inactivated by GTP, which stabilizes its closed structure, thereby obstructing the accessibility of substrates to the active sites. In contrast, Ca(2+) acts as a cofactor by inducing conformational change to the active open form. In absence of Ca(2+), Mg(2+) may bind Ca(2+)-binding sites, promoting GTP-binding and subsequent inhibition of the acyltransferase activity. Extracellularly reduced and activated by CLIC3. Its function is as follows. Calcium-dependent acyltransferase that catalyzes the formation of covalent bonds between peptide-bound glutamine and various primary amines, such as gamma-amino group of peptide-bound lysine, or mono- and polyamines, thereby producing cross-linked or aminated proteins, respectively. Involved in many biological processes, such as bone development, angiogenesis, wound healing, cellular differentiation, chromatin modification and apoptosis. Acts as a protein-glutamine gamma-glutamyltransferase by mediating the cross-linking of proteins, such as ACO2, HSPB6, FN1, HMGB1, RAP1GDS1, SLC25A4/ANT1, SPP1 and WDR54. Under physiological conditions, the protein cross-linking activity is inhibited by GTP; inhibition is relieved by Ca(2+) in response to various stresses. When secreted, catalyzes cross-linking of proteins of the extracellular matrix, such as FN1 and SPP1 resulting in the formation of scaffolds. Plays a key role during apoptosis, both by (1) promoting the cross-linking of cytoskeletal proteins resulting in condensation of the cytoplasm, and by (2) mediating cross-linking proteins of the extracellular matrix, resulting in the irreversible formation of scaffolds that stabilize the integrity of the dying cells before their clearance by phagocytosis, thereby preventing the leakage of harmful intracellular components. In addition to protein cross-linking, can use different monoamine substrates to catalyze a vast array of protein post-translational modifications: mediates aminylation of serotonin, dopamine, noradrenaline or histamine into glutamine residues of target proteins to generate protein serotonylation, dopaminylation, noradrenalinylation or histaminylation, respectively. Mediates protein serotonylation of small GTPases during activation and aggregation of platelets, leading to constitutive activation of these GTPases. Plays a key role in chromatin organization by mediating serotonylation and dopaminylation of histone H3. Catalyzes serotonylation of 'Gln-5' of histone H3 (H3Q5ser) during serotonergic neuron differentiation, thereby facilitating transcription. Acts as a mediator of neurotransmission-independent role of nuclear dopamine in ventral tegmental area (VTA) neurons: catalyzes dopaminylation of 'Gln-5' of histone H3 (H3Q5dop), thereby regulating relapse-related transcriptional plasticity in the reward system. Regulates vein remodeling by mediating serotonylation and subsequent inactivation of ATP2A2/SERCA2. Also acts as a protein deamidase by mediating the side chain deamidation of specific glutamine residues of proteins to glutamate. Catalyzes specific deamidation of protein gliadin, a component of wheat gluten in the diet. May also act as an isopeptidase cleaving the previously formed cross-links. Also able to participate in signaling pathways independently of its acyltransferase activity: acts as a signal transducer in alpha-1 adrenergic receptor-mediated stimulation of phospholipase C-delta (PLCD) activity and is required for coupling alpha-1 adrenergic agonists to the stimulation of phosphoinositide lipid metabolism. This chain is Protein-glutamine gamma-glutamyltransferase 2, found in Mus musculus (Mouse).